A 272-amino-acid polypeptide reads, in one-letter code: 3-methyl-2-oxobutanoate hydroxymethyltransferase (272 aa).

Mg(2+)-binding residues include Asp-52 and Asp-91. Residues 52–53 (DS), Asp-91, and Lys-121 each bind 3-methyl-2-oxobutanoate. Glu-123 serves as a coordination point for Mg(2+). Residue Glu-190 is the Proton acceptor of the active site.

The protein belongs to the PanB family. In terms of assembly, homodecamer; pentamer of dimers. Mg(2+) is required as a cofactor.

It localises to the cytoplasm. It catalyses the reaction 3-methyl-2-oxobutanoate + (6R)-5,10-methylene-5,6,7,8-tetrahydrofolate + H2O = 2-dehydropantoate + (6S)-5,6,7,8-tetrahydrofolate. It participates in cofactor biosynthesis; (R)-pantothenate biosynthesis; (R)-pantoate from 3-methyl-2-oxobutanoate: step 1/2. Its function is as follows. Catalyzes the reversible reaction in which hydroxymethyl group from 5,10-methylenetetrahydrofolate is transferred onto alpha-ketoisovalerate to form ketopantoate. The sequence is that of 3-methyl-2-oxobutanoate hydroxymethyltransferase from Christiangramia forsetii (strain DSM 17595 / CGMCC 1.15422 / KT0803) (Gramella forsetii).